Consider the following 422-residue polypeptide: O-methyltransferase kk1A (422 aa).

D277 is an S-adenosyl-L-methionine binding site. Residue H320 is the Proton acceptor of the active site.

The protein belongs to the class I-like SAM-binding methyltransferase superfamily. Cation-independent O-methyltransferase family.

It functions in the pathway secondary metabolite biosynthesis. O-methyltransferase; part of the gene cluster that mediates the biosynthesis of KK-1, a novel cyclic depsipeptide with 10 residues which is a promising active compound with high activity against many plant pathogens, especially Botrytis cinerea. Within the pathway, kk1A is responsible for the O-methylation of tyrosine as a free amino acid before its activation as an aminoacyl-AMP by the corresponding A domain of kk1B. The nonribosomal peptide synthetase (NRPS) kk1B catalyzes the elongation and cyclization of the decapeptide chain composed of 1 D-lactic acid residue (D-Lac), 1 pipecolic acid residue (Pip), 1 aspartic acid residue (Asp), 1 isoleucine residue (Ile), 1 glycine residue (Gly), 1 tyrosine residue (Tyr) and 4 valine residues (Val). The Asp, Ile and 3 Val residues are N-methylated by the 5 methyltransferase domains from the NRPS (found in modules 3, 5, 6, 7 and 9), whereas the Tyr residue is O-methylated by the cluster encoded O-methyltransferase kk1A. The thioesterase kk1J is likely to be involved in the corrective mechanism of peptide chain synthesis. The D-lactate dehydrogenase kk1H is involved in the synthesis of D-lactic acid from pyruvic acid, which is recognized by the A domain of the first kk1B module. The pyrroline-5-carboxylate reductase kk1I is involved in the synthesis of the L-pipecolic acid residue of KK-1 from delta-1-pyrroline-5-carboxylate (P5C), a metabolic intermediate of lysine. It is still unclear how kk1C and kk1D are involved in the production of KK-1. The polypeptide is O-methyltransferase kk1A (Curvularia clavata).